We begin with the raw amino-acid sequence, 392 residues long: Stilbene synthase 3 (392 aa).

55–58 (KFNR) provides a ligand contact to substrate. The active site involves Cys-164. Residues Leu-267 and 305 to 307 (GGP) each bind substrate.

Belongs to the thiolase-like superfamily. Chalcone/stilbene synthases family. As to quaternary structure, homodimer.

Its subcellular location is the cytoplasm. The enzyme catalyses 4-coumaroyl-CoA + 3 malonyl-CoA + 3 H(+) = trans-resveratrol + 4 CO2 + 4 CoA. Its pathway is phytoalexin biosynthesis; 3,4',5-trihydroxystilbene biosynthesis; 3,4',5-trihydroxystilbene from trans-4-coumarate: step 2/2. Functionally, mediates resistance to pathogens which are sensitive to stilbenes. This is Stilbene synthase 3 from Vitis vinifera (Grape).